A 233-amino-acid chain; its full sequence is DNA-directed RNA polymerase I subunit RPA34 (233 aa).

Phosphoserine is present on residues S10, S12, S14, and S60. A compositionally biased stretch (basic and acidic residues) spans D179–K191. Residues D179 to D233 are disordered. Over residues K208–D233 the composition is skewed to basic residues.

Belongs to the eukaryotic RPA34 RNA polymerase subunit family. Component of the RNA polymerase I (Pol I) complex consisting of 14 subunits: RPA135, RPA190, RPC40, RPA14, RPB5, RPO26, RPA43, RPB8, RPA12, RPB10, RPC19, RPC10, RPA49 and RPA34. The complex is composed of a horseshoe-shaped core containing ten subunits (RPA135, RPA190, RPB5, RPO26, RPB8, RPB10, RPC10, RPA12, RPC19 and RPC40) where RPA135 and RPA190 form the DNA-binding cleft. Outside of the core, RPA14 and RPA43 form the stalk that mediates interactions with transcription initiation factors and newly synthesized RNA. Forms a TFIIF-like heterodimer with RPA49; the heterodimer formed by RPA34 and RPA49 can be dissociated from the Pol I core giving rise to a 12 subunit form A* of Pol I (formerly called pol A) that shows impaired transcript elongation activity and increased sensitivity to alpha-amanitin. The heterodimer formed by RPA34 and RPA49 stabilizes subunit RPA12 and stimulates RPA12-dependent RNA cleavage.

The protein localises to the nucleus. Its subcellular location is the nucleolus. DNA-dependent RNA polymerases catalyze the transcription of DNA into RNA using the four ribonucleoside triphosphates as substrates. Component of RNA polymerase I (Pol I) which synthesizes ribosomal RNA precursors. Besides, RNA polymerase I has intrinsic RNA cleavage activity. The heterodimer formed by RPA34 and RPA49 stimulates transcript elongation by Pol I. This chain is DNA-directed RNA polymerase I subunit RPA34 (RPA34), found in Saccharomyces cerevisiae (strain ATCC 204508 / S288c) (Baker's yeast).